We begin with the raw amino-acid sequence, 235 residues long: Carboxy-S-adenosyl-L-methionine synthase (235 aa).

Residues Y35, 60-62 (GCS), 83-84 (DN), N124, and R191 contribute to the S-adenosyl-L-methionine site.

This sequence belongs to the class I-like SAM-binding methyltransferase superfamily. Cx-SAM synthase family. Homodimer.

It catalyses the reaction prephenate + S-adenosyl-L-methionine = carboxy-S-adenosyl-L-methionine + 3-phenylpyruvate + H2O. In terms of biological role, catalyzes the conversion of S-adenosyl-L-methionine (SAM) to carboxy-S-adenosyl-L-methionine (Cx-SAM). In Campylobacter jejuni subsp. jejuni serotype O:23/36 (strain 81-176), this protein is Carboxy-S-adenosyl-L-methionine synthase.